A 66-amino-acid polypeptide reads, in one-letter code: Cold shock-like protein CspD (66 aa).

The 60-residue stretch at 4-63 (GKVKWFNSEKGFGFIEVEGGDDVFVHFSAIQGDGFKTLEEGQEVSFEIVEGNRGPQAANV) folds into the CSD domain.

Homodimer.

It is found in the cytoplasm. This is Cold shock-like protein CspD (cspD) from Bacillus anthracis.